The chain runs to 92 residues: Tachykinin-2 (92 aa).

Residues 1-22 (MIRVGLILCCIFIVGVFEASSA) form the signal peptide. A propeptide spanning residues 23–37 (DDILTAHNLIKRSEV) is cleaved from the precursor. M49 carries the post-translational modification Methionine amide. Residues 52 to 92 (SEELTRRLIQHPGSMSETSKRGPPKKGDFNPNELKPESNIC) constitute a propeptide that is removed on maturation. The interval 61–92 (QHPGSMSETSKRGPPKKGDFNPNELKPESNIC) is disordered.

This sequence belongs to the tachykinin family. In terms of tissue distribution, expressed in the posterior salivary gland and more specifically in the mucus-secreting gland cells.

It is found in the secreted. In terms of biological role, tachykinins are active peptides which excite neurons, evoke behavioral responses, are potent vasodilators and secretagogues, and contract (directly or indirectly) many smooth muscles. The polypeptide is Tachykinin-2 (Octopus vulgaris (Common octopus)).